The sequence spans 490 residues: B3 domain-containing protein LOC_Os12g40080 (490 aa).

Residues glycine 24–serine 117 constitute a DNA-binding region (TF-B3 1). The segment at serine 161–aspartate 191 is disordered. The span at glutamate 169 to tryptophan 178 shows a compositional bias: polar residues. DNA-binding regions (TF-B3) lie at residues phenylalanine 236–leucine 331 and valine 389–serine 487.

The protein resides in the nucleus. The polypeptide is B3 domain-containing protein LOC_Os12g40080 (Oryza sativa subsp. japonica (Rice)).